The chain runs to 566 residues: Urease subunit alpha (566 aa).

The Urease domain occupies 129–566 (GGVDTHIHFI…LPLAQRYFLF (438 aa)). Residues histidine 134, histidine 136, and lysine 217 each coordinate Ni(2+). Position 217 is an N6-carboxylysine (lysine 217). Histidine 219 contributes to the substrate binding site. 2 residues coordinate Ni(2+): histidine 246 and histidine 272. The active-site Proton donor is histidine 320. Aspartate 360 is a binding site for Ni(2+).

This sequence belongs to the metallo-dependent hydrolases superfamily. Urease alpha subunit family. Heterotrimer of UreA (gamma), UreB (beta) and UreC (alpha) subunits. Three heterotrimers associate to form the active enzyme. The cofactor is Ni cation. In terms of processing, carboxylation allows a single lysine to coordinate two nickel ions.

The protein localises to the cytoplasm. The catalysed reaction is urea + 2 H2O + H(+) = hydrogencarbonate + 2 NH4(+). The protein operates within nitrogen metabolism; urea degradation; CO(2) and NH(3) from urea (urease route): step 1/1. The polypeptide is Urease subunit alpha (Janthinobacterium sp. (strain Marseille) (Minibacterium massiliensis)).